We begin with the raw amino-acid sequence, 375 residues long: Growth/differentiation factor 8 (375 aa).

Residues 1-23 form the signal peptide; it reads MQKLAVYVYIYLFMQILVHPVAL. A propeptide spanning residues 24-266 is cleaved from the precursor; sequence DGSSQPTENA…VTDTPKRSRR (243 aa). A glycan (N-linked (GlcNAc...) asparagine) is linked at Asn71. 4 disulfides stabilise this stretch: Cys272-Cys282, Cys281-Cys340, Cys309-Cys372, and Cys313-Cys374.

The protein belongs to the TGF-beta family. Homodimer; disulfide-linked.

It is found in the secreted. In terms of biological role, acts specifically as a negative regulator of skeletal muscle growth. This chain is Growth/differentiation factor 8 (MSTN), found in Meleagris gallopavo (Wild turkey).